Here is a 63-residue protein sequence, read N- to C-terminus: DNA-directed RNA polymerase 7 kDa subunit (63 aa).

Belongs to the poxviridae DNA-directed RNA polymerase 7 kDa subunit family. As to quaternary structure, the DNA-dependent RNA polymerase (vRNAP) consists of eight subunits encoded by early viral genes and termed according to their apparent molecular masses Rpo147, Rpo132, Rpo35, Rpo30, Rpo22, Rpo19, Rpo18, and Rpo7. The same holoenzyme, with the addition of the transcription-specificity factor RAP94, is used for early gene expression.

It is found in the virion. It carries out the reaction RNA(n) + a ribonucleoside 5'-triphosphate = RNA(n+1) + diphosphate. Functionally, part of the DNA-dependent RNA polymerase which catalyzes the transcription of viral DNA into RNA using the four ribonucleoside triphosphates as substrates. Responsible for the transcription of early, intermediate and late genes. DNA-dependent RNA polymerase associates with the early transcription factor (ETF), itself composed of OPG118 and OPG134, thereby allowing the early genes transcription. Late transcription, and probably also intermediate transcription, require newly synthesized RNA polymerase. The protein is DNA-directed RNA polymerase 7 kDa subunit (OPG090) of Monkeypox virus.